The following is a 546-amino-acid chain: CTP synthase (546 aa).

The interval 1-266 (MTTRYIFVTG…DQLVTKRFGI (266 aa)) is amidoligase domain. Ser-14 serves as a coordination point for CTP. Ser-14 contacts UTP. Residues 15-20 (SLGKGI) and Asp-72 each bind ATP. 2 residues coordinate Mg(2+): Asp-72 and Glu-140. CTP contacts are provided by residues 147-149 (DIE), 187-192 (KTKPTQ), and Lys-223. UTP is bound by residues 187–192 (KTKPTQ) and Lys-223. 239-241 (KDV) provides a ligand contact to ATP. Residues 291–542 (TIGMVGKYIE…VAAAYTYQKR (252 aa)) form the Glutamine amidotransferase type-1 domain. Gly-352 is a binding site for L-glutamine. The Nucleophile; for glutamine hydrolysis role is filled by Cys-379. L-glutamine is bound by residues 380-383 (LGMQ), Glu-403, and Arg-470. Catalysis depends on residues His-515 and Glu-517.

It belongs to the CTP synthase family. In terms of assembly, homotetramer.

It carries out the reaction UTP + L-glutamine + ATP + H2O = CTP + L-glutamate + ADP + phosphate + 2 H(+). It catalyses the reaction L-glutamine + H2O = L-glutamate + NH4(+). The catalysed reaction is UTP + NH4(+) + ATP = CTP + ADP + phosphate + 2 H(+). It participates in pyrimidine metabolism; CTP biosynthesis via de novo pathway; CTP from UDP: step 2/2. Its activity is regulated as follows. Allosterically activated by GTP, when glutamine is the substrate; GTP has no effect on the reaction when ammonia is the substrate. The allosteric effector GTP functions by stabilizing the protein conformation that binds the tetrahedral intermediate(s) formed during glutamine hydrolysis. Inhibited by the product CTP, via allosteric rather than competitive inhibition. Its function is as follows. Catalyzes the ATP-dependent amination of UTP to CTP with either L-glutamine or ammonia as the source of nitrogen. Regulates intracellular CTP levels through interactions with the four ribonucleotide triphosphates. The chain is CTP synthase from Shewanella halifaxensis (strain HAW-EB4).